Consider the following 1001-residue polypeptide: Serine/threonine-protein kinase TAO1 (1001 aa).

Phosphoserine is present on serine 9. The Protein kinase domain occupies 28–281 (FTDLREIGHG…SEELLKHIFV (254 aa)). Residues 34-42 (IGHGSFGAV) and lysine 57 contribute to the ATP site. Catalysis depends on aspartate 151, which acts as the Proton acceptor. The disordered stretch occupies residues 324-433 (PAVEAQEEEE…QVSRHKSHYR (110 aa)). Residues 350-373 (SNQSIPSMSISASSQSSSVNSLPD) show a composition bias toward low complexity. Composition is skewed to basic and acidic residues over residues 375-388 (SDDKSELDMMEGDH) and 399-416 (LKPEEENYREEGDPRTRA). Residues serine 421 and serine 445 each carry the phosphoserine modification. The stretch at 458–651 (SELREQMSGY…QTQKDLEHAM (194 aa)) forms a coiled coil. A disordered region spans residues 567-587 (KEELNENQSTPKKEKQEWLSK). Over residues 577–587 (PKKEKQEWLSK) the composition is skewed to basic and acidic residues. Threonine 669 bears the Phosphothreonine mark. Residues 754–877 (KAVLKRLKEE…LERQAREIEA (124 aa)) are a coiled coil. Residues 911–1001 (SHNPTGGPGP…ISNGSHMSYT (91 aa)) are disordered. Residue serine 965 is modified to Phosphoserine. Residues 975-1001 (GGRTEQGMSRSTSVTSQISNGSHMSYT) show a composition bias toward polar residues.

This sequence belongs to the protein kinase superfamily. STE Ser/Thr protein kinase family. STE20 subfamily. As to quaternary structure, self-associates. Interacts with MAP2K3. Interacts with SPRED1. Interacts with TESK1; the interaction inhibits TAOK1 kinase activity. Interacts with MAP3K7. In terms of processing, proteolytically processed by caspase-3 (CASP3). Autophosphorylated. Phosphorylated by ATM in response to DNA damage. Phosphorylated by LRRK2. As to expression, highly expressed in the testis, and to a lower extent also expressed in brain, placenta, colon and skeletal muscle.

The protein resides in the cytoplasm. The enzyme catalyses L-seryl-[protein] + ATP = O-phospho-L-seryl-[protein] + ADP + H(+). It catalyses the reaction L-threonyl-[protein] + ATP = O-phospho-L-threonyl-[protein] + ADP + H(+). Its activity is regulated as follows. Serine/threonine-protein kinase activity is inhibited by SPRED1. Serine/threonine-protein kinase involved in various processes such as p38/MAPK14 stress-activated MAPK cascade, DNA damage response and regulation of cytoskeleton stability. Phosphorylates MAP2K3, MAP2K6 and MARK2. Acts as an activator of the p38/MAPK14 stress-activated MAPK cascade by mediating phosphorylation and subsequent activation of the upstream MAP2K3 and MAP2K6 kinases. Involved in G-protein coupled receptor signaling to p38/MAPK14. In response to DNA damage, involved in the G2/M transition DNA damage checkpoint by activating the p38/MAPK14 stress-activated MAPK cascade, probably by mediating phosphorylation of MAP2K3 and MAP2K6. Acts as a regulator of cytoskeleton stability by phosphorylating 'Thr-208' of MARK2, leading to activate MARK2 kinase activity and subsequent phosphorylation and detachment of MAPT/TAU from microtubules. Also acts as a regulator of apoptosis: regulates apoptotic morphological changes, including cell contraction, membrane blebbing and apoptotic bodies formation via activation of the MAPK8/JNK cascade. Plays an essential role in the regulation of neuronal development in the central nervous system. Also plays a role in the regulation of neuronal migration to the cortical plate. The sequence is that of Serine/threonine-protein kinase TAO1 (TAOK1) from Homo sapiens (Human).